The chain runs to 415 residues: Serine/threonine transporter SstT (415 aa).

8 helical membrane-spanning segments follow: residues 23–43 (ILVG…AAIA), 47–67 (LGTL…LMLV), 85–105 (ILWL…LFSF), 144–164 (ALLK…GFAL), 181–201 (AVTF…FGLV), 220–240 (LMVL…LIVF), 303–323 (GAAI…GIAV), and 333–353 (VVAS…LLLI).

It belongs to the dicarboxylate/amino acid:cation symporter (DAACS) (TC 2.A.23) family.

Its subcellular location is the cell inner membrane. It catalyses the reaction L-serine(in) + Na(+)(in) = L-serine(out) + Na(+)(out). It carries out the reaction L-threonine(in) + Na(+)(in) = L-threonine(out) + Na(+)(out). Its function is as follows. Involved in the import of serine and threonine into the cell, with the concomitant import of sodium (symport system). In Cronobacter sakazakii (strain ATCC BAA-894) (Enterobacter sakazakii), this protein is Serine/threonine transporter SstT.